A 330-amino-acid polypeptide reads, in one-letter code: Aspartate--ammonia ligase (330 aa).

It belongs to the class-II aminoacyl-tRNA synthetase family. AsnA subfamily.

Its subcellular location is the cytoplasm. The enzyme catalyses L-aspartate + NH4(+) + ATP = L-asparagine + AMP + diphosphate + H(+). It participates in amino-acid biosynthesis; L-asparagine biosynthesis; L-asparagine from L-aspartate (ammonia route): step 1/1. This chain is Aspartate--ammonia ligase, found in Escherichia coli O45:K1 (strain S88 / ExPEC).